The primary structure comprises 68 residues: Gallinacin-10 (68 aa).

The N-terminal stretch at 1–19 is a signal peptide; sequence MKILCLLFAVLLFLFQAAP. A propeptide spanning residues 20–25 is cleaved from the precursor; that stretch reads GSADPL. 3 disulfide bridges follow: Cys32–Cys61, Cys39–Cys54, and Cys44–Cys62.

The protein belongs to the beta-defensin family. Strong expression in the testis, liver, gall bladder and kidney. Also expressed in the ovary and male and female reproductive tracts. Expressed in the ovarian stroma and the theca and granulosa layers of the ovarian follicle.

The protein localises to the secreted. It is found in the cytoplasmic granule. In terms of biological role, has bactericidal activity. The protein is Gallinacin-10 (GAL10) of Gallus gallus (Chicken).